The primary structure comprises 154 residues: Myoglobin (154 aa).

The Globin domain occupies Gly2–Lys148. Ser4 is subject to Phosphoserine. Nitrite is bound at residue His65. Position 65 (His65) interacts with O2. Thr68 is subject to Phosphothreonine. His94 provides a ligand contact to heme b.

The protein belongs to the globin family. Monomeric.

The protein localises to the cytoplasm. It is found in the sarcoplasm. The catalysed reaction is Fe(III)-heme b-[protein] + nitric oxide + H2O = Fe(II)-heme b-[protein] + nitrite + 2 H(+). The enzyme catalyses H2O2 + AH2 = A + 2 H2O. Monomeric heme protein which primary function is to store oxygen and facilitate its diffusion within muscle tissues. Reversibly binds oxygen through a pentacoordinated heme iron and enables its timely and efficient release as needed during periods of heightened demand. Depending on the oxidative conditions of tissues and cells, and in addition to its ability to bind oxygen, it also has a nitrite reductase activity whereby it regulates the production of bioactive nitric oxide. Under stress conditions, like hypoxia and anoxia, it also protects cells against reactive oxygen species thanks to its pseudoperoxidase activity. The chain is Myoglobin (MB) from Orcinus orca (Killer whale).